The following is a 1441-amino-acid chain: Receptor-type tyrosine-protein phosphatase T (1441 aa).

A signal peptide spans 1–25 (MASLAALALSLLLRLQLPPLPGARA). Over 26–747 (QSAAGGCSFD…EKQVDNTVKM (722 aa)) the chain is Extracellular. In terms of domain architecture, MAM spans 30-191 (GGCSFDEHYS…VRVLAHPCRK (162 aa)). Residues asparagine 78, asparagine 98, asparagine 137, and asparagine 208 are each glycosylated (N-linked (GlcNAc...) asparagine). In terms of domain architecture, Ig-like C2-type spans 193–284 (PHFLRLQNVE…SGVSNYAELI (92 aa)). A disulfide bond links cysteine 213 and cysteine 267. Fibronectin type-III domains lie at 291-384 (PIAP…TKCA), 389-483 (GPQN…TEED), 484-590 (VPGA…SAPS), and 591-726 (MPEY…ATKG). N-linked (GlcNAc...) asparagine glycosylation is found at asparagine 421, asparagine 510, asparagine 547, asparagine 601, asparagine 654, and asparagine 684. A helical membrane pass occupies residues 748–768 (AGVIAGLLMFIIILLGVMLTI). Residues 769–1441 (KRRRNAYSYS…EVALEYLSSF (673 aa)) are Cytoplasmic-facing. A disordered region spans residues 790–839 (TQSGAQREMGPVASADKPTTKLSASRNDEGFSSSSQDVNGFTDGSRGELS). The segment covering 809 to 828 (TKLSASRNDEGFSSSSQDVN) has biased composition (polar residues). Tyrosine-protein phosphatase domains are found at residues 889–1143 (FKEE…ILEA) and 1175–1437 (IKDE…ALEY). Residues aspartate 1052, 1084–1090 (CSAGAGR), and glutamine 1128 contribute to the substrate site. Residue cysteine 1084 is the Phosphocysteine intermediate of the active site. Serine 1208 bears the Phosphoserine mark. The active-site Phosphocysteine intermediate is the cysteine 1378.

It belongs to the protein-tyrosine phosphatase family. Receptor class 2B subfamily. As to expression, expressed in colon, lung, heart and testis, as well as in fetal and adult brain. Not detected in muscle and peripheral blood leukocytes.

The protein resides in the membrane. The enzyme catalyses O-phospho-L-tyrosyl-[protein] + H2O = L-tyrosyl-[protein] + phosphate. In terms of biological role, may be involved in both signal transduction and cellular adhesion in the CNS. The sequence is that of Receptor-type tyrosine-protein phosphatase T (PTPRT) from Homo sapiens (Human).